Consider the following 216-residue polypeptide: NADH-quinone oxidoreductase subunit C (216 aa).

The protein belongs to the complex I 30 kDa subunit family. In terms of assembly, NDH-1 is composed of 14 different subunits. Subunits NuoB, C, D, E, F, and G constitute the peripheral sector of the complex.

The protein resides in the cell inner membrane. The enzyme catalyses a quinone + NADH + 5 H(+)(in) = a quinol + NAD(+) + 4 H(+)(out). Its function is as follows. NDH-1 shuttles electrons from NADH, via FMN and iron-sulfur (Fe-S) centers, to quinones in the respiratory chain. The immediate electron acceptor for the enzyme in this species is believed to be ubiquinone. Couples the redox reaction to proton translocation (for every two electrons transferred, four hydrogen ions are translocated across the cytoplasmic membrane), and thus conserves the redox energy in a proton gradient. The sequence is that of NADH-quinone oxidoreductase subunit C from Francisella tularensis subsp. holarctica (strain FTNF002-00 / FTA).